The primary structure comprises 115 residues: Large ribosomal subunit protein uL24 (115 aa).

This sequence belongs to the universal ribosomal protein uL24 family. As to quaternary structure, part of the 50S ribosomal subunit.

In terms of biological role, one of two assembly initiator proteins, it binds directly to the 5'-end of the 23S rRNA, where it nucleates assembly of the 50S subunit. Its function is as follows. One of the proteins that surrounds the polypeptide exit tunnel on the outside of the subunit. The protein is Large ribosomal subunit protein uL24 of Synechocystis sp. (strain ATCC 27184 / PCC 6803 / Kazusa).